Reading from the N-terminus, the 611-residue chain is POU domain, class 6, transcription factor 1 (611 aa).

The tract at residues 62-93 is disordered; that stretch reads ASQAAGEAGPDNLGSSAEATVKSPPGIPPSPA. Residues 449–523 form the POU-specific domain; that stretch reads EDGINLEEIR…VLEKWLNEAE (75 aa). Positions 544-603 form a DNA-binding region, homeobox; that stretch reads KRKRRTSFTPQAIEALNAYFEKNPLPTGQEITEIAKELNYDREVVRVWFCNRRQTLKNTS.

This sequence belongs to the POU transcription factor family. Class-6 subfamily. In the embryo, expressed exclusively in the developing brain, whereas in the adult its expression is restricted to brain, heart, skeletal muscle and lung. In the brain, the highest expression levels are found in specific cell layers of the cortex, the olfactory bulb, the hippocampus and the cerebellum.

The protein resides in the nucleus. Transcription factor that binds preferentially to a variant of the octamer motif (5'-ATGATAAT-3'). The polypeptide is POU domain, class 6, transcription factor 1 (POU6F1) (Homo sapiens (Human)).